The sequence spans 371 residues: MILVSTTSAVPGALSSPSSPSNSSQEELLDDRDPLLVRAELALLSTIFVAVALSNGLVLGALIRRGRRGRWAPMHVFISHLCLADLAVALFQVLPQLAWDATDRFHGPDALCRAVKYLQMVGMYASSYMILAMTLDRHRAICRPMLAYRHGGGARWNRPVLVAWAFSLLLSLPQLFIFAQRDVGNGSGVFDCWARFAEPWGLRAYVTWIALMVFVAPALGIAACQVLIFREIHASLVPGPSERAGRRRRGHRTGSPSEGAHVSAAMAKTVRMTLVIVIVYVLCWAPFFLVQLWAAWDPEAPLERPPFVLLMLLASLNSCTNPWIYASFSSSVSSELRSLLCCAQRHTTHSLGPQDESCATASSSLMKDTPS.

A disordered region spans residues 1 to 27; the sequence is MILVSTTSAVPGALSSPSSPSNSSQEE. Residues 1 to 38 lie on the Extracellular side of the membrane; it reads MILVSTTSAVPGALSSPSSPSNSSQEELLDDRDPLLVR. Positions 15–24 are enriched in low complexity; that stretch reads SSPSSPSNSS. N22 is a glycosylation site (N-linked (GlcNAc...) asparagine). Residues 39-63 traverse the membrane as a helical segment; it reads AELALLSTIFVAVALSNGLVLGALI. Residues 64 to 77 are Cytoplasmic-facing; that stretch reads RRGRRGRWAPMHVF. A helical transmembrane segment spans residues 78-98; it reads ISHLCLADLAVALFQVLPQLA. At 99–113 the chain is on the extracellular side; it reads WDATDRFHGPDALCR. Residues 114 to 135 form a helical membrane-spanning segment; it reads AVKYLQMVGMYASSYMILAMTL. Topologically, residues 136–159 are cytoplasmic; it reads DRHRAICRPMLAYRHGGGARWNRP. A helical transmembrane segment spans residues 160-180; it reads VLVAWAFSLLLSLPQLFIFAQ. Topologically, residues 181-200 are extracellular; that stretch reads RDVGNGSGVFDCWARFAEPW. N185 carries N-linked (GlcNAc...) asparagine glycosylation. The chain crosses the membrane as a helical span at residues 201 to 220; that stretch reads GLRAYVTWIALMVFVAPALG. Residues 221–271 lie on the Cytoplasmic side of the membrane; that stretch reads IAACQVLIFREIHASLVPGPSERAGRRRRGHRTGSPSEGAHVSAAMAKTVR. A disordered region spans residues 240–259; sequence PSERAGRRRRGHRTGSPSEG. The helical transmembrane segment at 272–293 threads the bilayer; sequence MTLVIVIVYVLCWAPFFLVQLW. Residues 294–308 are Extracellular-facing; that stretch reads AAWDPEAPLERPPFV. The helical transmembrane segment at 309 to 328 threads the bilayer; sequence LLMLLASLNSCTNPWIYASF. Residues 329-371 are Cytoplasmic-facing; that stretch reads SSSVSSELRSLLCCAQRHTTHSLGPQDESCATASSSLMKDTPS. 2 S-palmitoyl cysteine lipidation sites follow: C341 and C342. The tract at residues 349–371 is disordered; it reads HSLGPQDESCATASSSLMKDTPS. A compositionally biased stretch (polar residues) spans 357–371; sequence SCATASSSLMKDTPS.

It belongs to the G-protein coupled receptor 1 family. Vasopressin/oxytocin receptor subfamily. In terms of assembly, interacts with ARRDC4. Identified in a complex containing at least ARRDC4, V2R and HGS. Interacts with TMEM147. In terms of tissue distribution, highly expressed in kidney (at protein level) and moderately expressed in liver (at protein level). No or extremely low expression in left ventricule, muscle, bone and brain (at protein level).

The protein resides in the cell membrane. Receptor for arginine vasopressin. The activity of this receptor is mediated by G proteins which activate adenylate cyclase. Involved in renal water reabsorption. In Mus musculus (Mouse), this protein is Vasopressin V2 receptor (Avpr2).